The chain runs to 116 residues: S-adenosylmethionine decarboxylase proenzyme (116 aa).

Ser-63 acts as the Schiff-base intermediate with substrate; via pyruvic acid in catalysis. Ser-63 bears the Pyruvic acid (Ser); by autocatalysis mark. His-68 acts as the Proton acceptor; for processing activity in catalysis. The active-site Proton donor; for catalytic activity is Cys-83.

The protein belongs to the prokaryotic AdoMetDC family. Type 1 subfamily. In terms of assembly, heterotetramer of two alpha and two beta chains arranged as a dimer of alpha/beta heterodimers. Pyruvate serves as cofactor. Post-translationally, is synthesized initially as an inactive proenzyme. Formation of the active enzyme involves a self-maturation process in which the active site pyruvoyl group is generated from an internal serine residue via an autocatalytic post-translational modification. Two non-identical subunits are generated from the proenzyme in this reaction, and the pyruvate is formed at the N-terminus of the alpha chain, which is derived from the carboxyl end of the proenzyme. The post-translation cleavage follows an unusual pathway, termed non-hydrolytic serinolysis, in which the side chain hydroxyl group of the serine supplies its oxygen atom to form the C-terminus of the beta chain, while the remainder of the serine residue undergoes an oxidative deamination to produce ammonia and the pyruvoyl group blocking the N-terminus of the alpha chain.

The catalysed reaction is S-adenosyl-L-methionine + H(+) = S-adenosyl 3-(methylsulfanyl)propylamine + CO2. It functions in the pathway amine and polyamine biosynthesis; S-adenosylmethioninamine biosynthesis; S-adenosylmethioninamine from S-adenosyl-L-methionine: step 1/1. Catalyzes the decarboxylation of S-adenosylmethionine to S-adenosylmethioninamine (dcAdoMet), the propylamine donor required for the synthesis of the polyamines spermine and spermidine from the diamine putrescine. The polypeptide is S-adenosylmethionine decarboxylase proenzyme (Clostridium botulinum (strain 657 / Type Ba4)).